The chain runs to 101 residues: Small ribosomal subunit protein uS14 (101 aa).

This sequence belongs to the universal ribosomal protein uS14 family. As to quaternary structure, part of the 30S ribosomal subunit. Contacts proteins S3 and S10.

Binds 16S rRNA, required for the assembly of 30S particles and may also be responsible for determining the conformation of the 16S rRNA at the A site. The protein is Small ribosomal subunit protein uS14 of Shewanella loihica (strain ATCC BAA-1088 / PV-4).